A 94-amino-acid chain; its full sequence is Large ribosomal subunit protein uL23 (94 aa).

The protein belongs to the universal ribosomal protein uL23 family. As to quaternary structure, part of the 50S ribosomal subunit. Contacts protein L29, and trigger factor when it is bound to the ribosome.

Functionally, one of the early assembly proteins it binds 23S rRNA. One of the proteins that surrounds the polypeptide exit tunnel on the outside of the ribosome. Forms the main docking site for trigger factor binding to the ribosome. The chain is Large ribosomal subunit protein uL23 from Trichlorobacter lovleyi (strain ATCC BAA-1151 / DSM 17278 / SZ) (Geobacter lovleyi).